A 148-amino-acid chain; its full sequence is uncharacterized protein (148 aa).

An N-terminal signal peptide occupies residues 1-16; that stretch reads MDVLFIALLVAPLILG. N-linked (GlcNAc...) asparagine glycosylation is present at Asn-50. Residues 91–125 are disordered; that stretch reads MDPQNPVTTKPVTTEPVTTEPVTTEPQSPNQNDAM. Residues 96 to 116 show a composition bias toward low complexity; that stretch reads PVTTKPVTTEPVTTEPVTTEP.

It is found in the secreted. This is an uncharacterized protein from Mus musculus (Mouse).